The chain runs to 129 residues: Small ribosomal subunit protein uS8 (129 aa).

It belongs to the universal ribosomal protein uS8 family. As to quaternary structure, part of the 30S ribosomal subunit. Contacts proteins S5 and S12.

Functionally, one of the primary rRNA binding proteins, it binds directly to 16S rRNA central domain where it helps coordinate assembly of the platform of the 30S subunit. The sequence is that of Small ribosomal subunit protein uS8 from Mycoplasma mycoides subsp. mycoides SC (strain CCUG 32753 / NCTC 10114 / PG1).